The sequence spans 726 residues: Catalase-peroxidase (726 aa).

Residues 1–33 (MSTSDDIHNTTATGKCPFHQGGHDQSAGGGTTT) are disordered. The tryptophyl-tyrosyl-methioninium (Trp-Tyr) (with M-252) cross-link spans 105-226 (WHGAGTYRSI…LGATEMGLIY (122 aa)). The active-site Proton acceptor is H106. The segment at residues 226 to 252 (YVNPEGPDHSGEPLSAAAAIRATFGNM) is a cross-link (tryptophyl-tyrosyl-methioninium (Tyr-Met) (with W-105)). A heme b-binding site is contributed by H267.

Belongs to the peroxidase family. Peroxidase/catalase subfamily. Homodimer or homotetramer. Requires heme b as cofactor. In terms of processing, formation of the three residue Trp-Tyr-Met cross-link is important for the catalase, but not the peroxidase activity of the enzyme.

It catalyses the reaction H2O2 + AH2 = A + 2 H2O. The catalysed reaction is 2 H2O2 = O2 + 2 H2O. In terms of biological role, bifunctional enzyme with both catalase and broad-spectrum peroxidase activity. This is Catalase-peroxidase from Escherichia coli O1:K1 / APEC.